We begin with the raw amino-acid sequence, 1048 residues long: Transcription factor mef2A (1048 aa).

Positions M1–D61 constitute an MADS-box domain. The segment covering D74–Y85 has biased composition (polar residues). Disordered stretches follow at residues D74–Q263, Q294–Q339, G386–T812, and L916–N1048. Residues D97 to G110 show a composition bias toward acidic residues. Low complexity-rich tracts occupy residues N130–H205, G212–Q263, Q294–N303, Q327–Q339, P393–K437, Y446–G466, and Q481–P500. Positions N249–M304 form a coiled coil. Polar residues predominate over residues Y506–H522. Over residues H529–Q539 the composition is skewed to basic residues. The span at Q540–Q593 shows a compositional bias: low complexity. The span at N600–M618 shows a compositional bias: polar residues. The span at N619 to N699 shows a compositional bias: low complexity. A compositionally biased stretch (polar residues) spans S715–V736. 3 stretches are compositionally biased toward low complexity: residues N738–T802, S924–S960, and N982–N1029.

The protein resides in the nucleus. Functionally, transcription factor that regulates cell differentiation during development. Seems to negatively regulate prestalk gene expression and positively regulate prespore gene expression. This Dictyostelium discoideum (Social amoeba) protein is Transcription factor mef2A (mef2A).